Consider the following 296-residue polypeptide: Acetylglutamate kinase (296 aa).

Substrate-binding positions include 69-70, R91, and N193; that span reads GG.

Belongs to the acetylglutamate kinase family. ArgB subfamily.

The protein resides in the cytoplasm. The enzyme catalyses N-acetyl-L-glutamate + ATP = N-acetyl-L-glutamyl 5-phosphate + ADP. Its pathway is amino-acid biosynthesis; L-arginine biosynthesis; N(2)-acetyl-L-ornithine from L-glutamate: step 2/4. Functionally, catalyzes the ATP-dependent phosphorylation of N-acetyl-L-glutamate. In Delftia acidovorans (strain DSM 14801 / SPH-1), this protein is Acetylglutamate kinase.